The chain runs to 170 residues: Class I hydrophobin E (170 aa).

An N-terminal signal peptide occupies residues 1–19; sequence MQLTTLLTGLISVLSVTTA. Disulfide bonds link Cys62-Cys126, Cys70-Cys117, Cys71-Cys105, and Cys127-Cys139.

Belongs to the fungal hydrophobin family.

The protein resides in the secreted. It is found in the cell wall. Aerial growth, conidiation, and dispersal of filamentous fungi in the environment rely upon a capability of their secreting small amphipathic proteins called hydrophobins (HPBs) with low sequence identity. Class I can self-assemble into an outermost layer of rodlet bundles on aerial cell surfaces, conferring cellular hydrophobicity that supports fungal growth, development and dispersal; whereas Class II form highly ordered films at water-air interfaces through intermolecular interactions but contribute nothing to the rodlet structure. In P.expansum, hydrophobins contribute to germination, tolerance to cold stress and mycotoxins patulin and citrinin production. In Penicillium expansum (Blue mold rot fungus), this protein is Class I hydrophobin E.